The sequence spans 200 residues: Polyadenylate-binding protein 1-like 2 (200 aa).

RRM domains lie at 2-80 (ASLY…WSQR) and 90-166 (GNVF…RFKS). Positions 170 to 200 (REAERGAWARQSTSADVKDFEEDTDEEATLR) are disordered. Residues 188–200 (DFEEDTDEEATLR) show a composition bias toward acidic residues.

This chain is Polyadenylate-binding protein 1-like 2 (PABPC1L2A), found in Homo sapiens (Human).